The sequence spans 149 residues: Deoxyuridine 5'-triphosphate nucleotidohydrolase (149 aa).

Substrate is bound by residues R68–G70, N81, L85–D87, and M95.

It belongs to the dUTPase family. Mg(2+) is required as a cofactor.

The enzyme catalyses dUTP + H2O = dUMP + diphosphate + H(+). It participates in pyrimidine metabolism; dUMP biosynthesis; dUMP from dCTP (dUTP route): step 2/2. Functionally, this enzyme is involved in nucleotide metabolism: it produces dUMP, the immediate precursor of thymidine nucleotides and it decreases the intracellular concentration of dUTP so that uracil cannot be incorporated into DNA. The sequence is that of Deoxyuridine 5'-triphosphate nucleotidohydrolase from Polynucleobacter necessarius subsp. necessarius (strain STIR1).